The sequence spans 589 residues: Monocopper oxidase-like protein SKS1 (589 aa).

Positions 1-24 (MAATCSLLASFLLCFALLSAVSFA) are cleaved as a signal peptide. 10 N-linked (GlcNAc...) asparagine glycosylation sites follow: asparagine 62, asparagine 111, asparagine 204, asparagine 243, asparagine 260, asparagine 296, asparagine 345, asparagine 365, asparagine 433, and asparagine 447. The tract at residues 322-356 (LPVPKTDVSSPWSAMSQPKTIRQNTSASGARPNPQ) is disordered. Positions 328-349 (DVSSPWSAMSQPKTIRQNTSAS) are enriched in polar residues. Histidine 455 lines the Cu cation pocket. Serine 563 carries GPI-anchor amidated serine lipidation. A propeptide spans 564 to 589 (AATSILNGHLKLMLLMVLLASVFRFC) (removed in mature form).

This sequence belongs to the multicopper oxidase family. The cofactor is Cu cation.

It is found in the cell membrane. The chain is Monocopper oxidase-like protein SKS1 (SKS1) from Arabidopsis thaliana (Mouse-ear cress).